The following is a 470-amino-acid chain: Acetyl-CoA decarbonylase/synthase complex subunit beta 2 (470 aa).

4 residues coordinate [Ni-Fe-S] cluster: Cys-189, Cys-192, Cys-278, and Cys-280.

Belongs to the CdhC family. As to quaternary structure, monomer. The ACDS complex is made up of alpha, epsilon, beta, gamma and delta chains with a probable stoichiometry of (alpha(2)epsilon(2))(4)-beta(8)-(gamma(1)delta(1))(8) (Potential). It depends on [Ni-Fe-S] cluster as a cofactor.

The enzyme catalyses Co(I)-[corrinoid Fe-S protein] + acetyl-CoA + H(+) = methyl-Co(III)-[corrinoid Fe-S protein] + CO + CoA. Its pathway is one-carbon metabolism; methanogenesis from acetate. Functionally, part of a complex that catalyzes the reversible cleavage of acetyl-CoA, allowing growth on acetate as sole source of carbon and energy. The alpha-epsilon complex generates CO from CO(2), while the beta subunit (this protein) combines the CO with CoA and a methyl group to form acetyl-CoA. The methyl group, which is incorporated into acetyl-CoA, is transferred to the beta subunit by a corrinoid iron-sulfur protein (the gamma-delta complex). The polypeptide is Acetyl-CoA decarbonylase/synthase complex subunit beta 2 (cdhC2) (Methanosarcina acetivorans (strain ATCC 35395 / DSM 2834 / JCM 12185 / C2A)).